A 395-amino-acid chain; its full sequence is Probable alcohol dehydrogenase EutG (395 aa).

Residues aspartate 57, 116-120, 156-160, lysine 178, and 197-201 each bind NAD(+); these read GSVLD, TTAGT, and LTEGV. Fe cation contacts are provided by aspartate 212, histidine 216, histidine 281, and histidine 295. The NAD(+) site is built by histidine 295 and aspartate 354.

This sequence belongs to the iron-containing alcohol dehydrogenase family. The cofactor is Fe cation.

The protein localises to the bacterial microcompartment. The enzyme catalyses ethanol + NAD(+) = acetaldehyde + NADH + H(+). It participates in amine and polyamine degradation; ethanolamine degradation. Functionally, may act on the acetaldehyde produced from the degradation of ethanolamine, producing ethanol. Active on acetaldehyde and isobutyraldehyde in vitro. In vitro works equally well with NADH or NADPH. The polypeptide is Probable alcohol dehydrogenase EutG (eutG) (Escherichia coli (strain K12)).